The following is a 382-amino-acid chain: Homeobox protein bagpipe (382 aa).

Disordered regions lie at residues 27–66 (NDILTRSNPETRRMSSVDSEPEPEKLKPSSDRERSISKSP), 144–178 (TSNDSDCDSPPPLSSSPSESPLSHDGSGLSRKKRS), and 314–382 (QPIP…VEID). Over residues 48–62 (EPEKLKPSSDRERSI) the composition is skewed to basic and acidic residues. Residues 158–170 (SSPSESPLSHDGS) are compositionally biased toward low complexity. The segment at residues 175 to 234 (KKRSRAAFSHAQVFELERRFAQQRYLSGPERSEMAKSLRLTETQVKIWFQNRRYKTKRKQ) is a DNA-binding region (homeobox). The span at 321-335 (QSSSFVTASSASSSP) shows a compositional bias: low complexity. Acidic residues predominate over residues 373 to 382 (EDVDENVEID).

The protein belongs to the NK-3 homeobox family. As to expression, is expressed in a segmented pattern in visceral muscle and in a subset of cardiac muscles. Loss of activity results in segmental gaps in midgut visceral muscle.

Its subcellular location is the nucleus. Functionally, involved in the determination of cell fates in the dorsal mesoderm. This Drosophila melanogaster (Fruit fly) protein is Homeobox protein bagpipe (bap).